The sequence spans 427 residues: Septin-8-A (427 aa).

The Septin-type G domain occupies 39–305 (QGFCFNILCV…ELYRRCKLEE (267 aa)). A G1 motif region spans residues 49–56 (GETGIGKS). Residues 49–56 (GETGIGKS), G104, 185–193 (KADTISKSE), G239, and R254 contribute to the GTP site. The tract at residues 101–104 (DTVG) is G3 motif. The tract at residues 184–187 (AKAD) is G4 motif. Positions 320-409 (LQETYEAKRK…KAAMEALQSQ (90 aa)) form a coiled coil. Residues 376–389 (QEESKKVEDKRRDL) are compositionally biased toward basic and acidic residues. The tract at residues 376–427 (QEESKKVEDKRRDLEEEMNSFNRRKAAMEALQSQSFQATSQQPLKKDKDRKN) is disordered. Polar residues predominate over residues 406-418 (LQSQSFQATSQQP).

This sequence belongs to the TRAFAC class TrmE-Era-EngA-EngB-Septin-like GTPase superfamily. Septin GTPase family.

This chain is Septin-8-A (sept8-a), found in Xenopus laevis (African clawed frog).